A 461-amino-acid polypeptide reads, in one-letter code: D-phenylhydantoinase (461 aa).

Residues His59, His61, and Lys151 each contribute to the a divalent metal cation site. Lys151 bears the N6-carboxylysine mark. A substrate-binding site is contributed by Tyr156. Positions 182 and 239 each coordinate a divalent metal cation. A substrate-binding site is contributed by Ser286. Asp313 provides a ligand contact to a divalent metal cation. Asn335 is a substrate binding site.

The protein belongs to the metallo-dependent hydrolases superfamily. Hydantoinase/dihydropyrimidinase family. In terms of assembly, homotetramer. A divalent metal cation is required as a cofactor. Post-translationally, carboxylation allows a single lysine to coordinate two divalent metal cations.

It carries out the reaction D-5-phenylhydantoin + H2O = N-carbamoyl-D-phenylglycine + H(+). Catalyzes the stereospecific hydrolysis of the cyclic amide bond of D-hydantoin derivatives with an aromatic side chains at the 5'-position. Has no activity on dihydropyrimidines. The physiological function is unknown. The polypeptide is D-phenylhydantoinase (Escherichia coli O81 (strain ED1a)).